Consider the following 457-residue polypeptide: Siroheme synthase (457 aa).

Residues 1–204 (MDHLPIFCQL…ADEKAVNATT (204 aa)) form a precorrin-2 dehydrogenase /sirohydrochlorin ferrochelatase region. NAD(+) contacts are provided by residues 22–23 (DV) and 43–44 (LT). Ser128 is subject to Phosphoserine. The segment at 216–457 (GEVVLVGAGP…RDKLNWFSNY (242 aa)) is uroporphyrinogen-III C-methyltransferase. Pro225 contributes to the S-adenosyl-L-methionine binding site. Asp248 serves as the catalytic Proton acceptor. The active-site Proton donor is the Lys270. Residues 301–303 (GGD), Ile306, 331–332 (TA), Met382, and Gly411 contribute to the S-adenosyl-L-methionine site.

In the N-terminal section; belongs to the precorrin-2 dehydrogenase / sirohydrochlorin ferrochelatase family. It in the C-terminal section; belongs to the precorrin methyltransferase family.

It carries out the reaction uroporphyrinogen III + 2 S-adenosyl-L-methionine = precorrin-2 + 2 S-adenosyl-L-homocysteine + H(+). The catalysed reaction is precorrin-2 + NAD(+) = sirohydrochlorin + NADH + 2 H(+). The enzyme catalyses siroheme + 2 H(+) = sirohydrochlorin + Fe(2+). Its pathway is cofactor biosynthesis; adenosylcobalamin biosynthesis; precorrin-2 from uroporphyrinogen III: step 1/1. It participates in cofactor biosynthesis; adenosylcobalamin biosynthesis; sirohydrochlorin from precorrin-2: step 1/1. The protein operates within porphyrin-containing compound metabolism; siroheme biosynthesis; precorrin-2 from uroporphyrinogen III: step 1/1. It functions in the pathway porphyrin-containing compound metabolism; siroheme biosynthesis; siroheme from sirohydrochlorin: step 1/1. Its pathway is porphyrin-containing compound metabolism; siroheme biosynthesis; sirohydrochlorin from precorrin-2: step 1/1. In terms of biological role, multifunctional enzyme that catalyzes the SAM-dependent methylations of uroporphyrinogen III at position C-2 and C-7 to form precorrin-2 via precorrin-1. Then it catalyzes the NAD-dependent ring dehydrogenation of precorrin-2 to yield sirohydrochlorin. Finally, it catalyzes the ferrochelation of sirohydrochlorin to yield siroheme. This Salmonella dublin (strain CT_02021853) protein is Siroheme synthase.